We begin with the raw amino-acid sequence, 217 residues long: ATP-dependent Clp protease proteolytic subunit (217 aa).

Catalysis depends on S119, which acts as the Nucleophile. The active site involves H144.

Belongs to the peptidase S14 family. Fourteen ClpP subunits assemble into 2 heptameric rings which stack back to back to give a disk-like structure with a central cavity, resembling the structure of eukaryotic proteasomes.

The protein resides in the cytoplasm. It catalyses the reaction Hydrolysis of proteins to small peptides in the presence of ATP and magnesium. alpha-casein is the usual test substrate. In the absence of ATP, only oligopeptides shorter than five residues are hydrolyzed (such as succinyl-Leu-Tyr-|-NHMec, and Leu-Tyr-Leu-|-Tyr-Trp, in which cleavage of the -Tyr-|-Leu- and -Tyr-|-Trp bonds also occurs).. Its function is as follows. Cleaves peptides in various proteins in a process that requires ATP hydrolysis. Has a chymotrypsin-like activity. Plays a major role in the degradation of misfolded proteins. This Bordetella bronchiseptica (strain ATCC BAA-588 / NCTC 13252 / RB50) (Alcaligenes bronchisepticus) protein is ATP-dependent Clp protease proteolytic subunit.